The chain runs to 311 residues: MAVDIQPACLGLYCGKTLLFKNGSTEIYGECGVCPRGQRTNAQKYCQPCTESPELYDWLYLGFMAMLPLVLHWFFIEWYSGKKSSSALFQHITALFECSMAAIITLLVSDPVGVLYIRSCRVLMLSDWYTMLYNPSPDYVTTVHCTHEAVYPLYTIVFIYYAFCLVLMMLLRPLLVKKIACGLGKSDRFKSIYAALYFFPILTVLQAVGGGLLYYAFPYIILVLSLVTLAVYMSASEIENCYDLLVRKKRLIVLFSHWLLHAYGIISISRVDKLEQDLPLLALVPTPALFYLFTAKFTEPSRILSEGANGH.

Over 1 to 57 the chain is Lumenal; it reads MAVDIQPACLGLYCGKTLLFKNGSTEIYGECGVCPRGQRTNAQKYCQPCTESPELYD. An N-linked (GlcNAc...) asparagine glycan is attached at N22. A helical membrane pass occupies residues 58–78; that stretch reads WLYLGFMAMLPLVLHWFFIEW. Residues 79-87 lie on the Cytoplasmic side of the membrane; that stretch reads YSGKKSSSA. The helical transmembrane segment at 88 to 108 threads the bilayer; that stretch reads LFQHITALFECSMAAIITLLV. The Lumenal portion of the chain corresponds to 109 to 149; that stretch reads SDPVGVLYIRSCRVLMLSDWYTMLYNPSPDYVTTVHCTHEA. A helical membrane pass occupies residues 150–170; the sequence is VYPLYTIVFIYYAFCLVLMML. At 171-188 the chain is on the cytoplasmic side; that stretch reads LRPLLVKKIACGLGKSDR. Residues 189 to 209 form a helical membrane-spanning segment; it reads FKSIYAALYFFPILTVLQAVG. Position 210 (G210) is a topological domain, lumenal. The helical transmembrane segment at 211 to 231 threads the bilayer; that stretch reads GLLYYAFPYIILVLSLVTLAV. Residues 232-250 lie on the Cytoplasmic side of the membrane; sequence YMSASEIENCYDLLVRKKR. Residues 251-271 form a helical membrane-spanning segment; the sequence is LIVLFSHWLLHAYGIISISRV. The Lumenal segment spans residues 272 to 277; it reads DKLEQD. The chain crosses the membrane as a helical span at residues 278 to 298; the sequence is LPLLALVPTPALFYLFTAKFT. At 299 to 311 the chain is on the cytoplasmic side; sequence EPSRILSEGANGH.

As to quaternary structure, interacts with RNF5 and MAPK8, but not with MAPK9. Binding to MAPK8 occurs before and after exposure to stress, such as UV irradiation. After exposure to stress, interacts with phosphorylated MAPK8. Competes with DUSP10 for MAPK8 binding. Associates with multiple components of the proteasome and with ERAD regulatory proteins including AMFR/GP78, CANX, PSMC1, PSMC2, PSMC3/TBP1, PSMC5, PSMC6, PSMD8, SEC61-ALPHA and UFD1. Interacts with DERL1 (in the presence of misfolded protein CFTR(F508del)). Post-translationally, ubiquitinated by RNF5 via 'Lys-63'-linked ubiquitin linkage in a UBE2N-dependent manner. Ubiquitination decreases association with components of the proteasome and ERAD.

The protein localises to the endoplasmic reticulum membrane. Functionally, regulates the duration of MAPK8 activity in response to various stress stimuli. Facilitates degradation of misfolded endoplasmic reticulum (ER) proteins through the recruitment of components of the proteasome and endoplasmic reticulum-associated degradation (ERAD) system. In Homo sapiens (Human), this protein is JNK1/MAPK8-associated membrane protein (JKAMP).